Reading from the N-terminus, the 118-residue chain is Large ribosomal subunit protein bL20 (118 aa).

The protein belongs to the bacterial ribosomal protein bL20 family.

Binds directly to 23S ribosomal RNA and is necessary for the in vitro assembly process of the 50S ribosomal subunit. It is not involved in the protein synthesizing functions of that subunit. The chain is Large ribosomal subunit protein bL20 from Caulobacter vibrioides (strain ATCC 19089 / CIP 103742 / CB 15) (Caulobacter crescentus).